We begin with the raw amino-acid sequence, 453 residues long: Allantoinase (453 aa).

Positions 59, 61, 146, 186, 242, and 315 each coordinate Zn(2+). K146 carries the N6-carboxylysine modification.

It belongs to the metallo-dependent hydrolases superfamily. Allantoinase family. As to quaternary structure, homotetramer. Requires Zn(2+) as cofactor. In terms of processing, carboxylation allows a single lysine to coordinate two zinc ions.

The enzyme catalyses (S)-allantoin + H2O = allantoate + H(+). The protein operates within nitrogen metabolism; (S)-allantoin degradation; allantoate from (S)-allantoin: step 1/1. Catalyzes the conversion of allantoin (5-ureidohydantoin) to allantoic acid by hydrolytic cleavage of the five-member hydantoin ring. The polypeptide is Allantoinase (Salmonella gallinarum (strain 287/91 / NCTC 13346)).